The sequence spans 346 residues: B3 domain-containing protein At5g60142 (346 aa).

A DNA-binding region (TF-B3) is located at residues 13–109 (PKFFKVYLPD…CFNFCIYGRA (97 aa)). Disordered regions lie at residues 158-179 (QDYN…ADND) and 192-243 (TSSE…HDRQ). Acidic residues predominate over residues 192–217 (TSSEDIIVIDDDDDDDDQDYGDDDHA). The segment covering 218-229 (DVEKERWRGVKT) has biased composition (basic and acidic residues).

It is found in the nucleus. The protein is B3 domain-containing protein At5g60142 of Arabidopsis thaliana (Mouse-ear cress).